The primary structure comprises 1481 residues: Cystic fibrosis transmembrane conductance regulator (1481 aa).

Over 1-77 the chain is Cytoplasmic; that stretch reads MQRSPLEKAS…KLINALRRCF (77 aa). The chain crosses the membrane as a helical span at residues 78 to 98; the sequence is FWRFMFYGIILYLGEVTKAVQ. Residues 81 to 365 enclose the ABC transmembrane type-1 1 domain; the sequence is FMFYGIILYL…WAVQTWYDSL (285 aa). The Extracellular portion of the chain corresponds to 99–122; sequence PLLLGRIIASYDPDNKVERSIAIY. A helical transmembrane segment spans residues 123 to 146; the sequence is LGIGLCLLFIVRTLLLHPAIFGLH. At 147-195 the chain is on the cytoplasmic side; that stretch reads HIGMQMRIAMFSLIYKKTLKLSSRVLDKISIGQLVSLLSNNLNKFDEGL. Residues 196–216 traverse the membrane as a helical segment; the sequence is ALAHFVWIAPLQVTLLMGLLW. At 217-222 the chain is on the extracellular side; it reads DLLQAF. The helical transmembrane segment at 223–243 threads the bilayer; it reads TFCGLAFLVVLALLQAGLGKM. At 244-298 the chain is on the cytoplasmic side; that stretch reads MMKYRDQRAGKINERLVITSEMIENIQSVKAYCWEEAMEKIIENLRQTELKLTRK. A helical transmembrane segment spans residues 299–319; it reads AAYVRYLNSSAFFFSGFFVVF. The Extracellular segment spans residues 320-339; the sequence is LSVLPYALLKGIILRKIFTT. The chain crosses the membrane as a helical span at residues 340–358; the sequence is ISFCIVLRMAVTRQFPWAV. The Cytoplasmic portion of the chain corresponds to 359–858; the sequence is QTWYDSLGAI…YLRYITVHKS (500 aa). ATP contacts are provided by residues tryptophan 401, 457-464, and glutamine 492; that span reads GSTGAGKT. The ABC transporter 1 domain maps to 421–645; it reads ISNCDTSLFF…RPDFSSKLMG (225 aa). Cysteine 523 carries the S-palmitoyl cysteine lipid modification. 2 positions are modified to phosphoserine: serine 548 and serine 659. The disordered R region stretch occupies residues 653–831; it reads TAERRNSIIT…EEINEEDLRD (179 aa). Serine 669 is modified (phosphoserine; by PKA). A Phosphoserine modification is found at serine 685. Lysine 687 participates in a covalent cross-link: Glycyl lysine isopeptide (Lys-Gly) (interchain with G-Cter in ubiquitin). Phosphoserine is present on residues serine 699 and serine 711. At threonine 716 the chain carries Phosphothreonine. Phosphoserine occurs at positions 736, 767, 790, 795, and 813. A helical transmembrane segment spans residues 859 to 879; the sequence is LMFVLIWCLVVFLVEVAASLV. Positions 859-1155 constitute an ABC transmembrane type-1 2 domain; it reads LMFVLIWCLV…AVNSSIDVDS (297 aa). Over 880–918 the chain is Extracellular; it reads VLCLFPKILLQDKGNSTKNASNSYAVIITSTSSYYIFYI. Residues asparagine 894 and asparagine 898 are each glycosylated (N-linked (GlcNAc...) asparagine). The discontinuously helical transmembrane segment at 919–939 threads the bilayer; it reads YVGVADTLLALGLFRGLPLVH. Residues 940–990 are Cytoplasmic-facing; sequence TLITVSKTLHHKMLQSVLQAPMSTLNTLKTGGILNRFSKDIAVLDDLLPLT. A helical transmembrane segment spans residues 991 to 1011; the sequence is IFDFIQLLLIVIGAVVVVSVL. The Extracellular segment spans residues 1012 to 1013; that stretch reads QP. The helical transmembrane segment at 1014–1034 threads the bilayer; sequence YIFLATVPVIAAFILLRGYFL. Over 1035-1095 the chain is Cytoplasmic; the sequence is HTSQQLKQLE…TANWFLYLST (61 aa). The chain crosses the membrane as a helical span at residues 1096 to 1116; that stretch reads LRWFQMRIEMIFVIFFIAVTF. At 1117–1130 the chain is on the extracellular side; it reads ISILTTGEGEGRVG. A helical membrane pass occupies residues 1131-1151; the sequence is IILTLAMNIMGTLQWAVNSSI. At 1152 to 1481 the chain is on the cytoplasmic side; that stretch reads DVDSLMRSVS…TEEEVQETKL (330 aa). The region spanning 1211–1444 is the ABC transporter 2 domain; it reads MTVKDLTAKY…KSLFRQAISP (234 aa). ATP-binding positions include tyrosine 1220 and 1245-1252; that span reads GRTGSGKS. Residues 1387–1481 form an interaction with GORASP2 region; the sequence is RTLKQAFADC…TEEEVQETKL (95 aa). A lipid anchor (S-palmitoyl cysteine) is attached at cysteine 1396. Phosphoserine is present on serine 1457. The PDZ-binding signature appears at 1479–1481; that stretch reads TKL.

This sequence belongs to the ABC transporter superfamily. ABCC family. CFTR transporter (TC 3.A.1.202) subfamily. As to quaternary structure, monomer; does not require oligomerization for channel activity. May form oligomers in the membrane. Interacts with SLC26A3, SLC26A6 and NHERF1. Interacts with SHANK2. Interacts with MYO6. Interacts (via C-terminus) with GOPC (via PDZ domain); this promotes CFTR internalization and thereby decreases channel activity. Interacts with SLC4A7 through NHERF1. Found in a complex with MYO5B and RAB11A. Interacts with ANO1. Interacts with SLC26A8. Interacts with AHCYL1; the interaction increases CFTR activity. Interacts with CSE1L. The core-glycosylated form interacts with GORASP2 (via PDZ GRASP-type 1 domain) in respone to ER stress. Interacts with MARCHF2; the interaction leads to CFTR ubiqtuitination and degradation. Interacts with ADGRG2. Post-translationally, N-glycosylated. Phosphorylated; cAMP treatment promotes phosphorylation and activates the channel. Dephosphorylation decreases the ATPase activity (in vitro). Phosphorylation at PKA sites activates the channel. Phosphorylation at PKC sites enhances the response to phosphorylation by PKA. Phosphorylated by AMPK; this inhibits channel activity. In terms of processing, ubiquitinated, leading to its degradation in the lysosome. Deubiquitination by USP10 in early endosomes enhances its endocytic recycling to the cell membrane. Ubiquitinated by RNF185 during ER stress. Ubiquitinated by MARCHF2.

Its subcellular location is the apical cell membrane. The protein localises to the early endosome membrane. The protein resides in the cell membrane. It is found in the recycling endosome membrane. It localises to the endoplasmic reticulum membrane. Its subcellular location is the nucleus. The catalysed reaction is ATP + H2O + closed Cl(-) channel = ADP + phosphate + open Cl(-) channel.. It carries out the reaction chloride(in) = chloride(out). It catalyses the reaction hydrogencarbonate(in) = hydrogencarbonate(out). The enzyme catalyses ATP + H2O = ADP + phosphate + H(+). In terms of biological role, epithelial ion channel that plays an important role in the regulation of epithelial ion and water transport and fluid homeostasis. Mediates the transport of chloride ions across the cell membrane. Possesses an intrinsic ATPase activity and utilizes ATP to gate its channel; the passive flow of anions through the channel is gated by cycles of ATP binding and hydrolysis by the ATP-binding domains. The ion channel is also permeable to HCO(3)(-); selectivity depends on the extracellular chloride concentration. Exerts its function also by modulating the activity of other ion channels and transporters. Contributes to the regulation of the pH and the ion content of the epithelial fluid layer. Modulates the activity of the epithelial sodium channel (ENaC) complex, in part by regulating the cell surface expression of the ENaC complex. May regulate bicarbonate secretion and salvage in epithelial cells by regulating the transporter SLC4A7. Can inhibit the chloride channel activity of ANO1. Plays a role in the chloride and bicarbonate homeostasis during sperm epididymal maturation and capacitation. In Ovis aries (Sheep), this protein is Cystic fibrosis transmembrane conductance regulator.